We begin with the raw amino-acid sequence, 163 residues long: E1B protein, small T-antigen (163 aa).

Belongs to the adenoviridae E1B 19 kDa protein family.

The protein localises to the host cell membrane. Its subcellular location is the host nucleus envelope. It is found in the host nucleus lamina. Functionally, putative adenovirus Bcl-2 homolog that inhibits apoptosis induced by TNF or FAS pathways, as well as p53-mediated apoptosis. Without E1B 19K function, virus production is compromised because of premature death of host cell. Interacts with Bax protein in cell lysates. This is E1B protein, small T-antigen from Human adenovirus A serotype 12 (HAdV-12).